The primary structure comprises 129 residues: Small ribosomal subunit protein uS11 (129 aa).

Belongs to the universal ribosomal protein uS11 family. Part of the 30S ribosomal subunit. Interacts with proteins S7 and S18. Binds to IF-3.

In terms of biological role, located on the platform of the 30S subunit, it bridges several disparate RNA helices of the 16S rRNA. Forms part of the Shine-Dalgarno cleft in the 70S ribosome. The protein is Small ribosomal subunit protein uS11 of Bartonella tribocorum (strain CIP 105476 / IBS 506).